The primary structure comprises 358 residues: Photosystem II protein D1 1 (358 aa).

The next 3 membrane-spanning stretches (helical) occupy residues 28–45 (YVGW…AATI), 117–132 (HFLI…QWEL), and 141–155 (WICV…AAFA). His117 provides a ligand contact to chlorophyll a. Residue Tyr125 coordinates pheophytin a. Asp169 and Glu188 together coordinate [CaMn4O5] cluster. A helical membrane pass occupies residues 196 to 217 (FHMLGVAGVFGGSLFSAMHGSL). Residue His197 participates in chlorophyll a binding. A quinone-binding positions include His214 and 263 to 264 (SF). His214 serves as a coordination point for Fe cation. Position 271 (His271) interacts with Fe cation. The chain crosses the membrane as a helical span at residues 273–287 (FLGAWPVIGIWFTSM). 4 residues coordinate [CaMn4O5] cluster: His331, Glu332, Asp341, and Ala343. Positions 344-358 (AAESTPVALQAPAIG) are excised as a propeptide.

It belongs to the reaction center PufL/M/PsbA/D family. As to quaternary structure, PSII is composed of 1 copy each of membrane proteins PsbA, PsbB, PsbC, PsbD, PsbE, PsbF, PsbH, PsbI, PsbJ, PsbK, PsbL, PsbM, PsbT, PsbX, PsbY, PsbZ, Psb30/Ycf12, peripheral proteins PsbO, CyanoQ (PsbQ), PsbU, PsbV and a large number of cofactors. It forms dimeric complexes. The D1/D2 heterodimer binds P680, chlorophylls that are the primary electron donor of PSII, and subsequent electron acceptors. It shares a non-heme iron and each subunit binds pheophytin, quinone, additional chlorophylls, carotenoids and lipids. D1 provides most of the ligands for the Mn4-Ca-O5 cluster of the oxygen-evolving complex (OEC). There is also a Cl(-1) ion associated with D1 and D2, which is required for oxygen evolution. The PSII complex binds additional chlorophylls, carotenoids and specific lipids. is required as a cofactor. Post-translationally, tyr-160 forms a radical intermediate that is referred to as redox-active TyrZ, YZ or Y-Z. C-terminally processed by CtpA; processing is essential to allow assembly of the oxygen-evolving complex and thus photosynthetic growth.

It localises to the cellular thylakoid membrane. It carries out the reaction 2 a plastoquinone + 4 hnu + 2 H2O = 2 a plastoquinol + O2. Photosystem II (PSII) is a light-driven water:plastoquinone oxidoreductase that uses light energy to abstract electrons from H(2)O, generating O(2) and a proton gradient subsequently used for ATP formation. It consists of a core antenna complex that captures photons, and an electron transfer chain that converts photonic excitation into a charge separation. The D1/D2 (PsbA/PsbD) reaction center heterodimer binds P680, the primary electron donor of PSII as well as several subsequent electron acceptors. The chain is Photosystem II protein D1 1 from Synechococcus sp. (strain CC9902).